The primary structure comprises 128 residues: DNA-directed RNA polymerase subunit omega (128 aa).

This sequence belongs to the RNA polymerase subunit omega family. In terms of assembly, the RNAP catalytic core consists of 2 alpha, 1 beta, 1 beta' and 1 omega subunit. When a sigma factor is associated with the core the holoenzyme is formed, which can initiate transcription.

The catalysed reaction is RNA(n) + a ribonucleoside 5'-triphosphate = RNA(n+1) + diphosphate. In terms of biological role, promotes RNA polymerase assembly. Latches the N- and C-terminal regions of the beta' subunit thereby facilitating its interaction with the beta and alpha subunits. In Neorickettsia sennetsu (strain ATCC VR-367 / Miyayama) (Ehrlichia sennetsu), this protein is DNA-directed RNA polymerase subunit omega.